The chain runs to 165 residues: Ecotin-like protein 4 (165 aa).

It belongs to the protease inhibitor I11 (ecotin) family.

The polypeptide is Ecotin-like protein 4 (Trypanosoma brucei brucei (strain 927/4 GUTat10.1)).